A 425-amino-acid chain; its full sequence is L-cysteine:1D-myo-inositol 2-amino-2-deoxy-alpha-D-glucopyranoside ligase (425 aa).

A Zn(2+)-binding site is contributed by C43. Residues 43–46, T58, and 81–83 contribute to the L-cysteinyl-5'-AMP site; these read CGIT and NVT. Positions 45 to 55 match the 'HIGH' region motif; it reads ITPYDATHIGH. A 'ERGGDP' region motif is present at residues 195-200; that stretch reads ERGGDP. W236 contacts L-cysteinyl-5'-AMP. Residue C240 coordinates Zn(2+). 258-260 contributes to the L-cysteinyl-5'-AMP binding site; sequence GSD. Zn(2+) is bound at residue H265. L-cysteinyl-5'-AMP is bound at residue V295. The 'KMSKS' region motif lies at 301–305; sequence KMSKS.

The protein belongs to the class-I aminoacyl-tRNA synthetase family. MshC subfamily. In terms of assembly, monomer. Requires Zn(2+) as cofactor.

It carries out the reaction 1D-myo-inositol 2-amino-2-deoxy-alpha-D-glucopyranoside + L-cysteine + ATP = 1D-myo-inositol 2-(L-cysteinylamino)-2-deoxy-alpha-D-glucopyranoside + AMP + diphosphate + H(+). Functionally, catalyzes the ATP-dependent condensation of GlcN-Ins and L-cysteine to form L-Cys-GlcN-Ins. The polypeptide is L-cysteine:1D-myo-inositol 2-amino-2-deoxy-alpha-D-glucopyranoside ligase (Sanguibacter keddieii (strain ATCC 51767 / DSM 10542 / NCFB 3025 / ST-74)).